We begin with the raw amino-acid sequence, 464 residues long: Plant intracellular Ras-group-related LRR protein 3 (464 aa).

A coiled-coil region spans residues 106 to 138 (AAVVSLEEVHEGYEKQLRDLEEEIGRVYASAVE). 10 LRR repeats span residues 160–183 (GGVV…LGKI), 184–206 (VGLV…ISGL), 207–230 (EKLE…GLLL), 232–252 (LRIL…IAQC), 254–275 (SLVE…FGYG), 276–299 (LLNL…ICEM), 301–322 (SLRY…IGRL), 323–347 (TNLE…ISDL), 348–370 (ANLR…FFRL), and 372–393 (KLEK…MVNQ). The GVYW; degenerate motif lies at 398–406 (VREFMRKRW).

The protein belongs to the SHOC2 family. In terms of tissue distribution, widely expressed.

Leucine-rich repeat protein that likely mediates protein interactions, possibly in the context of signal transduction. This chain is Plant intracellular Ras-group-related LRR protein 3 (PIRL3), found in Arabidopsis thaliana (Mouse-ear cress).